Reading from the N-terminus, the 508-residue chain is UDP-N-acetylmuramoylalanine--D-glutamate ligase (508 aa).

Residue 138 to 144 coordinates ATP; the sequence is GTNGKTT.

Belongs to the MurCDEF family.

It is found in the cytoplasm. The catalysed reaction is UDP-N-acetyl-alpha-D-muramoyl-L-alanine + D-glutamate + ATP = UDP-N-acetyl-alpha-D-muramoyl-L-alanyl-D-glutamate + ADP + phosphate + H(+). It participates in cell wall biogenesis; peptidoglycan biosynthesis. Its function is as follows. Cell wall formation. Catalyzes the addition of glutamate to the nucleotide precursor UDP-N-acetylmuramoyl-L-alanine (UMA). This is UDP-N-acetylmuramoylalanine--D-glutamate ligase from Bordetella avium (strain 197N).